The primary structure comprises 28 residues: IYVRPTKDELLYCGEFRELGQPDKKCRC.

Belongs to the ornatin family.

It localises to the secreted. Functionally, potent inhibitor of fibrinogen interaction with platelet receptors expressed on glycoprotein IIb-IIIa complex. May prevent blood from clotting during either feeding and/or storage of ingested blood. The protein is Ornatin-D of Placobdella ornata (Turtle leech).